Reading from the N-terminus, the 223-residue chain is Glutathione S-transferase alpha I (223 aa).

M1 carries the N-acetylmethionine modification. At A2 the chain carries N-acetylalanine; in Glutathione S-transferase alpha I, N-terminally processed. Residues 3–83 (RKPLLHYFNG…YVANKHNLYG (81 aa)) form the GST N-terminal domain. The residue at position 4 (K4) is an N6-succinyllysine. Glutathione is bound by residues Y9, R45, 54–55 (QV), and 67–68 (QT). Residues 85-208 (DMKERALIDM…QPGSQRKPPM (124 aa)) form the GST C-terminal domain.

It belongs to the GST superfamily. Alpha family. As to quaternary structure, homodimer or heterodimer of GSTA1 and GSTA2. In terms of tissue distribution, liver and lung.

The protein localises to the cytoplasm. It catalyses the reaction RX + glutathione = an S-substituted glutathione + a halide anion + H(+). The catalysed reaction is prostaglandin A2 + glutathione = prostaglandin A2-S-(R)-glutathione. The enzyme catalyses prostaglandin J2 + glutathione = prostaglandin J2-S-(R)-glutathione. It carries out the reaction (13S)-hydroperoxy-(9Z,11E)-octadecadienoate + 2 glutathione = (13S)-hydroxy-(9Z,11E)-octadecadienoate + glutathione disulfide + H2O. It catalyses the reaction androst-5-ene-3,17-dione = androst-4-ene-3,17-dione. Glutathione S-transferase that catalyzes the nucleophilic attack of the sulfur atom of glutathione on the electrophilic groups of a wide range of exogenous and endogenous compounds. Involved in the formation of glutathione conjugates of both prostaglandin A2 (PGA2) and prostaglandin J2 (PGJ2). It also catalyzes the isomerization of D5-androstene-3,17-dione (AD) into D4-androstene-3,17-dione and may therefore play an important role in hormone biosynthesis. Through its glutathione-dependent peroxidase activity toward the fatty acid hydroperoxide (13S)-hydroperoxy-(9Z,11E)-octadecadienoate/13-HPODE it is also involved in the metabolism of oxidized linoleic acid. The chain is Glutathione S-transferase alpha I from Oryctolagus cuniculus (Rabbit).